The primary structure comprises 32 residues: Peptide II.10.10 (32 aa).

Intrachain disulfides connect Cys5–Cys24, Cys10–Cys29, and Cys14–Cys31.

This sequence belongs to the short scorpion toxin superfamily. Potassium channel inhibitor family. Alpha-KTx 10 subfamily. Expressed by the venom gland.

The protein resides in the secreted. The chain is Peptide II.10.10 from Centruroides tecomanus (Scorpion).